The following is a 77-amino-acid chain: Probable small nuclear ribonucleoprotein G (77 aa).

Positions 4-76 (THPPELKKYM…VVIMEPKERI (73 aa)) constitute a Sm domain.

Belongs to the snRNP Sm proteins family. As to quaternary structure, core component of the spliceosomal U1, U2, U4 and U5 small nuclear ribonucleoproteins (snRNPs), the building blocks of the spliceosome.

It localises to the cytoplasm. It is found in the cytosol. Its subcellular location is the nucleus. Plays a role in pre-mRNA splicing as a core component of the spliceosomal U1, U2, U4 and U5 small nuclear ribonucleoproteins (snRNPs), the building blocks of the spliceosome. The polypeptide is Probable small nuclear ribonucleoprotein G (snr-7) (Caenorhabditis elegans).